The sequence spans 189 residues: Peptidyl-tRNA hydrolase (189 aa).

Tyr-14 contributes to the tRNA binding site. His-19 serves as the catalytic Proton acceptor. Residues Tyr-64, Asn-66, and Asn-112 each coordinate tRNA.

It belongs to the PTH family. In terms of assembly, monomer.

The protein localises to the cytoplasm. It carries out the reaction an N-acyl-L-alpha-aminoacyl-tRNA + H2O = an N-acyl-L-amino acid + a tRNA + H(+). Functionally, hydrolyzes ribosome-free peptidyl-tRNAs (with 1 or more amino acids incorporated), which drop off the ribosome during protein synthesis, or as a result of ribosome stalling. In terms of biological role, catalyzes the release of premature peptidyl moieties from peptidyl-tRNA molecules trapped in stalled 50S ribosomal subunits, and thus maintains levels of free tRNAs and 50S ribosomes. The sequence is that of Peptidyl-tRNA hydrolase from Clostridium botulinum (strain Okra / Type B1).